Here is a 238-residue protein sequence, read N- to C-terminus: Probable septum site-determining protein MinC (238 aa).

This sequence belongs to the MinC family. As to quaternary structure, interacts with MinD and FtsZ.

Its function is as follows. Cell division inhibitor that blocks the formation of polar Z ring septums. Rapidly oscillates between the poles of the cell to destabilize FtsZ filaments that have formed before they mature into polar Z rings. Prevents FtsZ polymerization. This chain is Probable septum site-determining protein MinC, found in Xylella fastidiosa (strain M12).